Here is a 631-residue protein sequence, read N- to C-terminus: Phosphomethylpyrimidine synthase (631 aa).

Substrate-binding positions include asparagine 239, methionine 268, tyrosine 297, histidine 333, 353 to 355, 394 to 397, and glutamate 433; these read SRG and DGLR. Histidine 437 is a Zn(2+) binding site. Position 460 (tyrosine 460) interacts with substrate. Position 501 (histidine 501) interacts with Zn(2+). Positions 581, 584, and 589 each coordinate [4Fe-4S] cluster.

This sequence belongs to the ThiC family. In terms of assembly, homodimer. The cofactor is [4Fe-4S] cluster.

It catalyses the reaction 5-amino-1-(5-phospho-beta-D-ribosyl)imidazole + S-adenosyl-L-methionine = 4-amino-2-methyl-5-(phosphooxymethyl)pyrimidine + CO + 5'-deoxyadenosine + formate + L-methionine + 3 H(+). It functions in the pathway cofactor biosynthesis; thiamine diphosphate biosynthesis. Catalyzes the synthesis of the hydroxymethylpyrimidine phosphate (HMP-P) moiety of thiamine from aminoimidazole ribotide (AIR) in a radical S-adenosyl-L-methionine (SAM)-dependent reaction. In Escherichia coli O6:H1 (strain CFT073 / ATCC 700928 / UPEC), this protein is Phosphomethylpyrimidine synthase.